Consider the following 396-residue polypeptide: MARRLFTSESVTEGHPDKIADQISDAVLDAIFEKDPLARVACETLVTTGLVLVAGEITTDCYVDIPRVARETIREIGYTRAKYGFDCDTCAVITSIDEQSSDIAQGVDRALEVRERYGNEDELEATGAGDQGMMFGYATTETPELMPLPISLAHRLARRLAEVRKSRLLPYLRPDGKTQVTVEYENGRPVRVDTIVISTQHHPRVTLDEIRSGVLEHVVKPVVPPEFLDGSTRFFVNPTGRFVIGGPQGDTGLTGRKIIVDTYGGMARHGGGSFSGKDPTKVDRSASYAARYVAKNIVAAGLAEKCEFQVAYAIGVAHPVSMMVDTFGTGRVDEQTLVKLVKEHFDLRPAAIIKELDLRRPIYRQVSVYGHFGRNDLDLPWERTDKAEALRRGAGL.

ATP is bound at residue histidine 15. A Mg(2+)-binding site is contributed by aspartate 17. Glutamate 43 contributes to the K(+) binding site. Residues glutamate 56 and glutamine 99 each contribute to the L-methionine site. The segment at 99 to 109 is flexible loop; sequence QSSDIAQGVDR. ATP is bound by residues 175 to 177, 241 to 242, aspartate 250, 256 to 257, serine 273, and lysine 277; these read DGK, RF, and RK. Position 250 (aspartate 250) interacts with L-methionine. L-methionine is bound at residue lysine 281.

The protein belongs to the AdoMet synthase family. Homotetramer; dimer of dimers. It depends on Mg(2+) as a cofactor. Requires K(+) as cofactor.

It localises to the cytoplasm. The enzyme catalyses L-methionine + ATP + H2O = S-adenosyl-L-methionine + phosphate + diphosphate. It participates in amino-acid biosynthesis; S-adenosyl-L-methionine biosynthesis; S-adenosyl-L-methionine from L-methionine: step 1/1. Catalyzes the formation of S-adenosylmethionine (AdoMet) from methionine and ATP. The overall synthetic reaction is composed of two sequential steps, AdoMet formation and the subsequent tripolyphosphate hydrolysis which occurs prior to release of AdoMet from the enzyme. In Pelotomaculum thermopropionicum (strain DSM 13744 / JCM 10971 / SI), this protein is S-adenosylmethionine synthase.